The sequence spans 360 residues: RNA demethylase ALKBH5 (360 aa).

The segment at 1–53 is disordered; it reads MSATYTDLREKLQSLNRDSPKEVRKRKQPASDTEEEDEAGSEPEAEEEEARKV. Residues 7–22 are compositionally biased toward basic and acidic residues; that stretch reads DLREKLQSLNRDSPKE. The span at 32 to 48 shows a compositional bias: acidic residues; sequence DTEEEDEAGSEPEAEEE. Tyr107 is an active-site residue. Residues Asn161, Tyr163, His172, His234, and Arg245 each coordinate 2-oxoglutarate. An intrachain disulfide couples Cys198 to Cys235. The interval 261–360 is disordered; the sequence is EMKSLSSSYQ…PVRKVKMRRH (100 aa). The span at 264–280 shows a compositional bias: polar residues; it reads SLSSSYQPERLQGSNRQ. Positions 281-290 are enriched in basic residues; the sequence is HILKPKRSHR. Basic and acidic residues-rich tracts occupy residues 291–312 and 330–340; these read KADP…ENRR and YWRRSHDHVDT.

It belongs to the alkB family. As to quaternary structure, monomer. Fe(2+) is required as a cofactor.

The protein resides in the nucleus speckle. It carries out the reaction an N(6)-methyladenosine in mRNA + 2-oxoglutarate + O2 = an adenosine in mRNA + formaldehyde + succinate + CO2. Functionally, dioxygenase that specifically demethylates N(6)-methyladenosine (m6A) RNA, the most prevalent internal modification of messenger RNA (mRNA) in higher eukaryotes. Demethylates RNA by oxidative demethylation, which requires molecular oxygen, alpha-ketoglutarate and iron. Demethylation of m6A mRNA affects mRNA processing, translation and export. The protein is RNA demethylase ALKBH5 (alkbh5) of Xenopus laevis (African clawed frog).